Consider the following 302-residue polypeptide: Syntaxin-17 (302 aa).

Serine 2 is modified (N-acetylserine). The Cytoplasmic segment spans residues 2–228 (SEDEEKVKLR…KNLGKAAKYK (227 aa)). An N6-acetyllysine modification is found at lysine 41. Positions 53 to 123 (EEHINAGRTV…EELKKQFNDE (71 aa)) form a coiled coil. Tyrosine 157 carries the phosphotyrosine; by ABL1 modification. Residues 162-224 (IPRDQNAAES…EEGTKNLGKA (63 aa)) form the t-SNARE coiled-coil homology domain. Residues 229 to 249 (LAALPVAGALIGGVVGGPIGL) form a helical membrane-spanning segment. The interval 229–275 (LAALPVAGALIGGVVGGPIGLLAGFKVAGIAAALGGGVLGFTGGKLI) is necessary and sufficient for localization to autophagosome. Over 250–254 (LAGFK) the chain is Lumenal. A helical transmembrane segment spans residues 255 to 275 (VAGIAAALGGGVLGFTGGKLI). Residues 276-302 (QRRKQKMMEKLASSCPDLPSQTDKKCS) are Cytoplasmic-facing. Serine 289 carries the post-translational modification Phosphoserine. The short motif at 299–302 (KKCS) is the Endoplasmic reticulum retention signal element.

The protein belongs to the syntaxin family. As to quaternary structure, forms a SNARE complex composed of VAMP8, SNAP29 and STX17 involved in fusion of autophagosome with lysosome. May interact with VTI1B. Probably interacts with BET1, SCFD1 and SEC22B. Interacts with PTPN2 and ABL1; involved in STX17 phosphorylation. Interacts with COPB1. Interacts with TMED9 and TMED10; the interaction is direct. Interacts with VAMP7. Interacts with RUBCNL/PACER; promoting targeting of RUBCNL/PACER to autophagosome. Interacts with VAMP8, SNAP29, VPS39 and VPS41; these interactions are increased in the absence of TMEM39A. Interacts with IRGM; promoting STX17 recruitment to autophagosomes. Interacts with ATG8 proteins GABARAP and MAP1LC3B. Interacts with RNF115; this interaction enhances STX17 stability which in turn promotes autophagosome maturation. Interacts with RAB39A (GTP-bound); the interaction promotes autophagosome-lysosome membrane fusion driven by STX17-SNAP29-VAMP8. Interacts with RAB39B; the interaction may promote a different fonction in autophagy as compared with RAB39A. Phosphorylated at Tyr-157 probably by ABL1. Dephosphorylation by PTPN2; regulates exit from the endoplasmic reticulum.

The protein resides in the endoplasmic reticulum membrane. The protein localises to the smooth endoplasmic reticulum membrane. Its subcellular location is the endoplasmic reticulum-Golgi intermediate compartment membrane. It localises to the cytoplasmic vesicle. It is found in the autophagosome membrane. The protein resides in the COPII-coated vesicle membrane. The protein localises to the cytoplasm. Its subcellular location is the cytosol. It localises to the mitochondrion membrane. It is found in the autolysosome membrane. Its function is as follows. SNAREs, soluble N-ethylmaleimide-sensitive factor-attachment protein receptors, are essential proteins for fusion of cellular membranes. SNAREs localized on opposing membranes assemble to form a trans-SNARE complex, an extended, parallel four alpha-helical bundle that drives membrane fusion. STX17 is a SNARE of the autophagosome involved in autophagy through the direct control of autophagosome membrane fusion with the lysosome membrane. May also play a role in the early secretory pathway where it may maintain the architecture of the endoplasmic reticulum-Golgi intermediate compartment/ERGIC and Golgi and/or regulate transport between the endoplasmic reticulum, the ERGIC and the Golgi. In Bos taurus (Bovine), this protein is Syntaxin-17.